The sequence spans 350 residues: Pleckstrin (350 aa).

The 98-residue stretch at 4–101 (KRIREGYLVK…WVRDIKKAIK (98 aa)) folds into the PH 1 domain. N6-acetyllysine is present on Lys64. Phosphoserine is present on residues Ser113 and Ser117. One can recognise a DEP domain in the interval 136 to 221 (PEKGIKELNL…NPDAFYYFPD (86 aa)). The PH 2 domain occupies 244 to 347 (IIIKQGCLLK…WIKAIQVASR (104 aa)).

In terms of biological role, major protein kinase C substrate of platelets. The chain is Pleckstrin (Plek) from Rattus norvegicus (Rat).